We begin with the raw amino-acid sequence, 245 residues long: S-methyl-5'-thioinosine phosphorylase (245 aa).

Phosphate-binding positions include T10 and 52–53 (RH). M185 serves as a coordination point for substrate. T186 provides a ligand contact to phosphate. 209-211 (NPA) lines the substrate pocket.

This sequence belongs to the PNP/MTAP phosphorylase family. MTAP subfamily. As to quaternary structure, homotrimer.

The enzyme catalyses S-methyl-5'-thioinosine + phosphate = 5-(methylsulfanyl)-alpha-D-ribose 1-phosphate + hypoxanthine. It participates in purine metabolism; purine nucleoside salvage. Functionally, catalyzes the reversible phosphorylation of S-methyl-5'-thioinosine (MTI) to hypoxanthine and 5-methylthioribose-1-phosphate. Involved in the breakdown of S-methyl-5'-thioadenosine (MTA), a major by-product of polyamine biosynthesis. Catabolism of (MTA) occurs via deamination to MTI and phosphorolysis to hypoxanthine. Involved in quorum sensing. This chain is S-methyl-5'-thioinosine phosphorylase, found in Pseudomonas aeruginosa (strain ATCC 15692 / DSM 22644 / CIP 104116 / JCM 14847 / LMG 12228 / 1C / PRS 101 / PAO1).